A 154-amino-acid chain; its full sequence is Myoglobin (154 aa).

The Globin domain occupies 2–148 (GLSDGEWQIV…FRNDIAAKYK (147 aa)). Position 4 is a phosphoserine (Ser4). A nitrite-binding site is contributed by His65. His65 serves as a coordination point for O2. A Phosphothreonine modification is found at Thr68. A heme b-binding site is contributed by His94.

It belongs to the globin family. As to quaternary structure, monomeric.

The protein localises to the cytoplasm. Its subcellular location is the sarcoplasm. It carries out the reaction Fe(III)-heme b-[protein] + nitric oxide + H2O = Fe(II)-heme b-[protein] + nitrite + 2 H(+). It catalyses the reaction H2O2 + AH2 = A + 2 H2O. Functionally, monomeric heme protein which primary function is to store oxygen and facilitate its diffusion within muscle tissues. Reversibly binds oxygen through a pentacoordinated heme iron and enables its timely and efficient release as needed during periods of heightened demand. Depending on the oxidative conditions of tissues and cells, and in addition to its ability to bind oxygen, it also has a nitrite reductase activity whereby it regulates the production of bioactive nitric oxide. Under stress conditions, like hypoxia and anoxia, it also protects cells against reactive oxygen species thanks to its pseudoperoxidase activity. This Canis lupus familiaris (Dog) protein is Myoglobin (MB).